A 659-amino-acid chain; its full sequence is ATP-binding cassette sub-family D member 3 (659 aa).

An interaction with PEX19 region spans residues 2–61; that stretch reads AAFSKYLTARNSSLAGAAFLLFCLLHKRRRALGLHGKKSGKPPLQNNEKEGKKERAVVDK. Residue N12 is glycosylated (N-linked (GlcNAc...) asparagine). Position 61 is an N6-acetyllysine (K61). Residues 84–104 form a helical membrane-spanning segment; that stretch reads GYLILIAVMLVSRTYCDVWMI. One can recognise an ABC transmembrane type-1 domain in the interval 85–372; it reads YLILIAVMLV…MLLRMSQALG (288 aa). N-linked (GlcNAc...) asparagine glycosylation occurs at N106. Residues 126 to 146 traverse the membrane as a helical segment; the sequence is LFNFIAAMPLISLVNNFLKYG. N206 carries N-linked (GlcNAc...) asparagine glycosylation. Residues 224 to 244 form a helical membrane-spanning segment; the sequence is AIGAQGPASMMAYLLVSGLFL. K260 bears the N6-acetyllysine mark. The helical transmembrane segment at 313 to 333 threads the bilayer; sequence MGFIDSIIAKYIATVVGYLVV. K399 is modified (N6-acetyllysine). Phosphoserine is present on S424. Residues 434–659 enclose the ABC transporter domain; that stretch reads INADNIIKFD…ITEDTVEFGS (226 aa). An ATP-binding site is contributed by 473-480; it reads GPNGCGKS. K533 carries the post-translational modification N6-acetyllysine. S659 is subject to Phosphoserine.

The protein belongs to the ABC transporter superfamily. ABCD family. Peroxisomal fatty acyl CoA transporter (TC 3.A.1.203) subfamily. As to quaternary structure, homodimers. Can form heterodimers with ABCD1 and ABCD2. Dimerization is necessary to form an active transporter. Interacts with PEX19; mediates the targeting of ABCD3 to peroxisomes. Ubiquitinated by PEX2 during pexophagy in response to starvation, leading to its degradation.

The protein localises to the peroxisome membrane. It carries out the reaction a very long-chain fatty acyl-CoA + H2O = a very long-chain fatty acid + CoA + H(+). It catalyses the reaction a very long-chain fatty acid(in) + ATP + H2O = a very long-chain fatty acid(out) + ADP + phosphate + H(+). The enzyme catalyses a long-chain fatty acyl-CoA + H2O = a long-chain fatty acid + CoA + H(+). The catalysed reaction is a long-chain fatty acid(in) + ATP + H2O = a long-chain fatty acid(out) + ADP + phosphate + H(+). It carries out the reaction pristanoyl-CoA + H2O = 2,6,10,14-tetramethylpentadecanoate + CoA + H(+). It catalyses the reaction 2,6,10,14-tetramethylpentadecanoate(in) + ATP + H2O = 2,6,10,14-tetramethylpentadecanoate(out) + ADP + phosphate + H(+). The enzyme catalyses hexadecanedioyl-CoA + H2O = hexadecanedioate + CoA + H(+). The catalysed reaction is hexadecanedioate(in) + ATP + H2O = hexadecanedioate(out) + ADP + phosphate + H(+). It carries out the reaction (5Z,8Z,11Z,14Z,17Z)-eicosapentaenoyl-CoA + H2O = (5Z,8Z,11Z,14Z,17Z)-eicosapentaenoate + CoA + H(+). It catalyses the reaction (5Z,8Z,11Z,14Z,17Z)-eicosapentaenoate(in) + ATP + H2O = (5Z,8Z,11Z,14Z,17Z)-eicosapentaenoate(out) + ADP + phosphate + H(+). The enzyme catalyses (4Z,7Z,10Z,13Z,16Z,19Z)-docosahexaenoyl-CoA + H2O = (4Z,7Z,10Z,13Z,16Z,19Z)-docosahexaenoate + CoA + H(+). The catalysed reaction is (4Z,7Z,10Z,13Z,16Z,19Z)-docosahexaenoate(in) + ATP + H2O = (4Z,7Z,10Z,13Z,16Z,19Z)-docosahexaenoate(out) + ADP + phosphate + H(+). Broad substrate specificity ATP-dependent transporter of the ATP-binding cassette (ABC) family that catalyzes the transport of long-chain fatty acids (LCFA)-CoA, dicarboxylic acids-CoA, long-branched-chain fatty acids-CoA and bile acids from the cytosol to the peroxisome lumen for beta-oxydation. Has fatty acyl-CoA thioesterase and ATPase activities. Probably hydrolyzes fatty acyl-CoAs into free fatty acids prior to their ATP-dependent transport into peroxisomes. Thus, play a role in regulation of LCFAs and energy metabolism namely, in the degradation and biosynthesis of fatty acids by beta-oxidation. The chain is ATP-binding cassette sub-family D member 3 (Abcd3) from Rattus norvegicus (Rat).